A 297-amino-acid chain; its full sequence is RNA polymerase sigma-F factor (297 aa).

The tract at residues M1–G46 is disordered. A compositionally biased stretch (pro residues) spans Q10–P22. Over residues Q23–P33 the composition is skewed to basic and acidic residues. Residues D101 to I114 carry the Polymerase core binding motif. Positions Q264–A283 form a DNA-binding region, H-T-H motif.

This sequence belongs to the sigma-70 factor family. SigB subfamily.

Functionally, sigma factors are initiation factors that promote the attachment of RNA polymerase to specific initiation sites and are then released. This sigma factor is required for normal spore maturation. In Kitasatospora aureofaciens (Streptomyces aureofaciens), this protein is RNA polymerase sigma-F factor (sigF).